The primary structure comprises 539 residues: Chaperone Ric-8A (539 aa).

The protein belongs to the synembryn family.

The protein localises to the cytoplasm. It localises to the cell cortex. In terms of biological role, chaperone that specifically binds and folds nascent G alpha proteins prior to G protein heterotrimer formation, promoting their stability and activity: folds GNAI1, GNAO1, GNA13 and GNAQ. Does not fold G(s) G-alpha proteins GNAS nor GNAL. Also acts as a guanine nucleotide exchange factor (GEF) for G alpha proteins by stimulating exchange of bound GDP for free GTP. The sequence is that of Chaperone Ric-8A (ric8a) from Xenopus tropicalis (Western clawed frog).